A 931-amino-acid polypeptide reads, in one-letter code: Probable UDP-N-acetylglucosamine--peptide N-acetylglucosaminyltransferase SPINDLY (931 aa).

Residues 1-15 (MAWTEKDVENGKESE) are compositionally biased toward basic and acidic residues. Positions 1-38 (MAWTEKDVENGKESESLGNNGFLKGGQSSSGSKGSPGR) are disordered. Residues 25–37 (GGQSSSGSKGSPG) show a composition bias toward low complexity. TPR repeat units lie at residues 48-81 (DKDAITYANILRSRNKFVDALAIYESVLEKDSKS), 82-115 (IESLIGKGICLQMQNTGRLAFESFSEAIKVDPQN), 116-149 (ACALTHCGILYKDEGRLVEAAESYEKALKADPSY), 157-190 (AIVLTDIGTSLKLAGNTQEGIQKYYEAIKIDSHY), 191-224 (APAYYNLGVVYSEMMQYDMALNCYEKAALERPMY), 225-258 (AEAYCNMGVIFKNRGDLESAIACYERCLAVSPNF), 266-299 (AIALTDLGTKVKLEGDINQGVAYYKKALCYNWHY), 300-333 (ADAMYNLGVAYGEMLKFDMAIVFYELAFHFNPHC), 334-367 (AEACNNLGVIYKDRDNLDKAVECYQLALSIKPNF), 369-401 (QSLNNLGVVYTVQGKMDAAASMIEKAIIANPTY), and 402-435 (AEAYNNLGVLYRDAGNISLAIEAYEQCLKIDPDS). Residues 436-931 (RNAGQNRLLA…NHNGNHGNLS (496 aa)) are catalytic region. Over residues 864 to 884 (QQQQTQTESVVPEESSVNPSE) the composition is skewed to low complexity. Residues 864–931 (QQQQTQTESV…NHNGNHGNLS (68 aa)) form a disordered region. Polar residues predominate over residues 910-931 (KSSTSEENGVQSNHNGNHGNLS).

Belongs to the glycosyltransferase 41 family. O-GlcNAc transferase subfamily.

It is found in the nucleus. The enzyme catalyses L-seryl-[protein] + UDP-N-acetyl-alpha-D-glucosamine = 3-O-(N-acetyl-beta-D-glucosaminyl)-L-seryl-[protein] + UDP + H(+). It carries out the reaction L-threonyl-[protein] + UDP-N-acetyl-alpha-D-glucosamine = 3-O-(N-acetyl-beta-D-glucosaminyl)-L-threonyl-[protein] + UDP + H(+). It functions in the pathway protein modification; protein glycosylation. Its function is as follows. Probable O-linked N-acetylglucosamine transferase (OGT) involved in various processes such as gibberellin (GA) signaling pathway. OGTs catalyze the addition of nucleotide-activated sugars directly onto the polypeptide through O-glycosidic linkage with the hydroxyl of serine or threonine. Probably acts by adding O-linked sugars to yet unknown proteins. The chain is Probable UDP-N-acetylglucosamine--peptide N-acetylglucosaminyltransferase SPINDLY (SPY) from Solanum lycopersicum (Tomato).